A 183-amino-acid chain; its full sequence is MASRAGPRAAGTDGSDFQHRERVAMHYQMSVTLKYEIKKLIYVHLVIWLLLVAKMSVGHLRLLSHDQVAMPYQWEYPYLLSIVPSVLGLLSFPRNNISYLVLSMISMGLFSIAPLIYGSMEMFPAAQQLYRHGKAYRFLFGFSAVSVMYLVLVLAVQVHAWQLYYSKKLLDSWFTSTQEKKRK.

At 1–39 (MASRAGPRAAGTDGSDFQHRERVAMHYQMSVTLKYEIKK) the chain is on the cytoplasmic side. The residue at position 3 (Ser3) is a Phosphoserine. A helical transmembrane segment spans residues 40-60 (LIYVHLVIWLLLVAKMSVGHL). Over 61 to 71 (RLLSHDQVAMP) the chain is Lumenal. The chain crosses the membrane as a helical span at residues 72 to 92 (YQWEYPYLLSIVPSVLGLLSF). Topologically, residues 93-96 (PRNN) are cytoplasmic. The chain crosses the membrane as a helical span at residues 97 to 117 (ISYLVLSMISMGLFSIAPLIY). Residues 118–137 (GSMEMFPAAQQLYRHGKAYR) are Lumenal-facing. Residues 138–158 (FLFGFSAVSVMYLVLVLAVQV) traverse the membrane as a helical segment. At 159 to 183 (HAWQLYYSKKLLDSWFTSTQEKKRK) the chain is on the cytoplasmic side.

Belongs to the jagunal family. In terms of assembly, interacts with COPA, COPB2 and COPG2.

It is found in the endoplasmic reticulum membrane. Its function is as follows. Endoplasmic reticulum transmembrane protein involved in vesicle-mediated transport, which is required for neutrophil function. Required for vesicle-mediated transport; it is however unclear whether it is involved in early secretory pathway or intracellular protein transport. Acts as a regulator of neutrophil function, probably via its role in vesicle-mediated transport: required for defense against fungal pathogens and for granulocyte colony-stimulating factor (GM-CSF) signaling pathway; possibly by regulating glycosylation and/or targeting of proteins contributing to the viability and migration of neutrophils. The polypeptide is Protein jagunal homolog 1 (Mus musculus (Mouse)).